Here is a 139-residue protein sequence, read N- to C-terminus: MCIFCNIVEGRDHGYIVYSNDRVVAFLDKFPITPGHTLVVPRTHYENFLEISEDVIPYLCTAVRKISIAVKKALKADGIRILTNIGKSAGQVVFHSHFHIVPTWSQDPDIMKDFVPRKEQSREYYEYVQKAIIETLKNI.

One can recognise an HIT domain in the interval 3-110 (IFCNIVEGRD…VPTWSQDPDI (108 aa)). The short motif at 95–99 (HSHFH) is the Histidine triad motif element.

This is an uncharacterized protein from Saccharolobus solfataricus (strain ATCC 35092 / DSM 1617 / JCM 11322 / P2) (Sulfolobus solfataricus).